We begin with the raw amino-acid sequence, 695 residues long: Probable serine/threonine-protein kinase DDB_G0279405 (695 aa).

Disordered regions lie at residues 119-138 (IVAQ…PQPQ) and 149-192 (QIPT…KRHK). Over residues 124–138 (QPQPQPQPQPQPQPQ) the composition is skewed to pro residues. Over residues 149 to 160 (QIPTTPPQQISQ) the composition is skewed to low complexity. Over residues 161–173 (FNITGNKSPSSIG) the composition is skewed to polar residues. The region spanning 201-462 (YVFVRKLGKG…IAEIKSHKWT (262 aa)) is the Protein kinase domain. Residues 207 to 215 (LGKGTFGKV) and Lys230 contribute to the ATP site. The active-site Proton acceptor is the Asp329. The interval 491-580 (TDHTIKPSDN…NQNQNNNNNS (90 aa)) is disordered. Residues 510–528 (LSSSSGGESSGIIGSSNES) are compositionally biased toward low complexity. The segment covering 529–541 (KSMYNNVNSKQKI) has biased composition (polar residues). Low complexity predominate over residues 542–580 (QNQNQNQNQNQNQNQNQNQNQNHNQNQNQNQNQNNNNNS).

Belongs to the protein kinase superfamily. Ser/Thr protein kinase family.

It catalyses the reaction L-seryl-[protein] + ATP = O-phospho-L-seryl-[protein] + ADP + H(+). The enzyme catalyses L-threonyl-[protein] + ATP = O-phospho-L-threonyl-[protein] + ADP + H(+). In Dictyostelium discoideum (Social amoeba), this protein is Probable serine/threonine-protein kinase DDB_G0279405.